A 335-amino-acid polypeptide reads, in one-letter code: Trans-3-hydroxy-L-proline dehydratase (335 aa).

C91 functions as the Proton acceptor in the catalytic mechanism. Residues 92 to 93 (GH), H222, and 256 to 257 (GS) contribute to the substrate site.

It belongs to the proline racemase family. As to quaternary structure, homodimer.

It catalyses the reaction trans-3-hydroxy-L-proline = 1-pyrroline-2-carboxylate + H2O. Catalyzes the dehydration of trans-3-hydroxy-L-proline (t3LHyp) to Delta(1)-pyrroline-2-carboxylate (Pyr2C). Does not possess neither proline racemase nor 4-hydroxyproline 2-epimerase activities. This Burkholderia cenocepacia (strain HI2424) protein is Trans-3-hydroxy-L-proline dehydratase.